A 760-amino-acid polypeptide reads, in one-letter code: E4 SUMO-protein ligase PIAL2 (760 aa).

Positions I143–D301 are interacting domain (IND), required for interaction with MOM1 and PIAL1. The SP-RING-type zinc-finger motif lies at P298–H379. Positions 329, 331, 352, and 355 each coordinate Zn(2+). Over residues G440–C450 the composition is skewed to basic and acidic residues. Disordered regions lie at residues G440–D471, L492–D522, G631–R657, and S699–S760. Polar residues-rich tracts occupy residues L492–P518, G631–Q653, and S699–T729.

This sequence belongs to the PIAL protein ligase family. As to quaternary structure, homodimer. Interacts with MOM1 and PIAL1 to form a high molecular mass complex which mediates transcriptional silencing at heterochromatin regions. Expressed in leaves, stems and flowers, and, at low levels, in siliques and old leaves.

Its subcellular location is the nucleus. The protein operates within protein modification; protein sumoylation. Together with MOM1 and PIAL1, regulates transcriptional gene silencing (TGS) independently of changes in DNA methylation. E4-type SUMO ligase that promotes SUMO chain formation in a SCE1-dependent manner and thus contributes to a pathway for proteolytic removal of sumoylation substrates. Involved in stress responses and sulfur metabolism. This is E4 SUMO-protein ligase PIAL2 from Arabidopsis thaliana (Mouse-ear cress).